The chain runs to 284 residues: Lipoyl synthase (284 aa).

[4Fe-4S] cluster-binding residues include Cys-36, Cys-41, Cys-47, Cys-62, Cys-66, Cys-69, and Ser-273. Residues 48 to 262 (WGKGTATFMI…RTIGLKKGFR (215 aa)) enclose the Radical SAM core domain.

This sequence belongs to the radical SAM superfamily. Lipoyl synthase family. [4Fe-4S] cluster is required as a cofactor.

It localises to the cytoplasm. It catalyses the reaction [[Fe-S] cluster scaffold protein carrying a second [4Fe-4S](2+) cluster] + N(6)-octanoyl-L-lysyl-[protein] + 2 oxidized [2Fe-2S]-[ferredoxin] + 2 S-adenosyl-L-methionine + 4 H(+) = [[Fe-S] cluster scaffold protein] + N(6)-[(R)-dihydrolipoyl]-L-lysyl-[protein] + 4 Fe(3+) + 2 hydrogen sulfide + 2 5'-deoxyadenosine + 2 L-methionine + 2 reduced [2Fe-2S]-[ferredoxin]. Its pathway is protein modification; protein lipoylation via endogenous pathway; protein N(6)-(lipoyl)lysine from octanoyl-[acyl-carrier-protein]: step 2/2. In terms of biological role, catalyzes the radical-mediated insertion of two sulfur atoms into the C-6 and C-8 positions of the octanoyl moiety bound to the lipoyl domains of lipoate-dependent enzymes, thereby converting the octanoylated domains into lipoylated derivatives. The polypeptide is Lipoyl synthase (Phocaeicola vulgatus (strain ATCC 8482 / DSM 1447 / JCM 5826 / CCUG 4940 / NBRC 14291 / NCTC 11154) (Bacteroides vulgatus)).